Reading from the N-terminus, the 59-residue chain is uncharacterized protein (59 aa).

Helical transmembrane passes span 1 to 21 (MNMY…YIFI) and 30 to 50 (GSWI…PYFY).

It localises to the cell membrane. This is an uncharacterized protein from Bacillus subtilis (strain 168).